The sequence spans 504 residues: Maturase K (504 aa).

The protein belongs to the intron maturase 2 family. MatK subfamily.

The protein localises to the plastid. The protein resides in the chloroplast. Functionally, usually encoded in the trnK tRNA gene intron. Probably assists in splicing its own and other chloroplast group II introns. This is Maturase K from Erythrina crista-galli (Cockspur coral tree).